The chain runs to 361 residues: Peptide chain release factor 1 (361 aa).

N5-methylglutamine is present on Q236.

This sequence belongs to the prokaryotic/mitochondrial release factor family. Methylated by PrmC. Methylation increases the termination efficiency of RF1.

It localises to the cytoplasm. Its function is as follows. Peptide chain release factor 1 directs the termination of translation in response to the peptide chain termination codons UAG and UAA. This chain is Peptide chain release factor 1, found in Lactobacillus delbrueckii subsp. bulgaricus (strain ATCC 11842 / DSM 20081 / BCRC 10696 / JCM 1002 / NBRC 13953 / NCIMB 11778 / NCTC 12712 / WDCM 00102 / Lb 14).